Here is a 262-residue protein sequence, read N- to C-terminus: Mlc titration factor A (262 aa).

Histidine 111, histidine 148, histidine 152, and glutamate 211 together coordinate Zn(2+).

Belongs to the MtfA family. In terms of assembly, interacts with Mlc. Zn(2+) is required as a cofactor.

The protein localises to the cytoplasm. Functionally, involved in the modulation of the activity of the glucose-phosphotransferase system (glucose-PTS). Interacts with the transcriptional repressor Mlc, preventing its interaction with DNA and leading to the modulation of expression of genes regulated by Mlc, including ptsG, which encodes the PTS system glucose-specific EIICB component. Its function is as follows. Shows zinc-dependent metallopeptidase activity. This Serratia proteamaculans (strain 568) protein is Mlc titration factor A.